The primary structure comprises 30 residues: Elongation factor 1-delta (30 aa).

The protein belongs to the EF-1-beta/EF-1-delta family. In terms of assembly, EF-1 is composed of 4 subunits: alpha, beta (1B-alpha=beta'), delta (1B-beta), and gamma (1B-gamma).

EF-1-beta and EF-1-delta stimulate the exchange of GDP bound to EF-1-alpha to GTP. In Populus euphratica (Euphrates poplar), this protein is Elongation factor 1-delta.